The primary structure comprises 608 residues: Phosphogluconate dehydratase (608 aa).

Residues cysteine 154 and cysteine 221 each contribute to the [4Fe-4S] cluster site.

Belongs to the IlvD/Edd family. [4Fe-4S] cluster serves as cofactor.

The enzyme catalyses 6-phospho-D-gluconate = 2-dehydro-3-deoxy-6-phospho-D-gluconate + H2O. Its pathway is carbohydrate metabolism; Entner-Doudoroff pathway. Its function is as follows. Catalyzes the dehydration of 6-phospho-D-gluconate to 2-dehydro-3-deoxy-6-phospho-D-gluconate. In Pseudomonas aeruginosa (strain ATCC 15692 / DSM 22644 / CIP 104116 / JCM 14847 / LMG 12228 / 1C / PRS 101 / PAO1), this protein is Phosphogluconate dehydratase.